Consider the following 335-residue polypeptide: Foldase protein PrsA (335 aa).

The first 20 residues, 1–20 (MKKKIFAGAVTLLSVAVLAA), serve as a signal peptide directing secretion. Residue cysteine 21 is the site of N-palmitoyl cysteine attachment. Cysteine 21 carries S-diacylglycerol cysteine lipidation. One can recognise a PpiC domain in the interval 142-239 (TPEVTAQIIK…ASYYIVKLVK (98 aa)). The segment at 300–335 (TGSSTSSSSAASSSKTSESSSAAESSSKEASSSAAE) is disordered. Low complexity predominate over residues 302 to 335 (SSTSSSSAASSSKTSESSSAAESSSKEASSSAAE).

Belongs to the PrsA family.

The protein resides in the cell membrane. It carries out the reaction [protein]-peptidylproline (omega=180) = [protein]-peptidylproline (omega=0). Its function is as follows. Plays a major role in protein secretion by helping the post-translocational extracellular folding of several secreted proteins. This Streptococcus sanguinis (strain SK36) protein is Foldase protein PrsA.